Here is a 285-residue protein sequence, read N- to C-terminus: Ribose-phosphate pyrophosphokinase (285 aa).

ATP-binding positions include 33 to 35 (DGE) and 91 to 92 (RQ). Mg(2+)-binding residues include H125 and D162. Residue K185 is part of the active site. Residues R187, D211, and 215-219 (STGGT) each bind D-ribose 5-phosphate.

This sequence belongs to the ribose-phosphate pyrophosphokinase family. Class III (archaeal) subfamily. Mg(2+) is required as a cofactor.

It is found in the cytoplasm. The catalysed reaction is D-ribose 5-phosphate + ATP = 5-phospho-alpha-D-ribose 1-diphosphate + AMP + H(+). It functions in the pathway metabolic intermediate biosynthesis; 5-phospho-alpha-D-ribose 1-diphosphate biosynthesis; 5-phospho-alpha-D-ribose 1-diphosphate from D-ribose 5-phosphate (route I): step 1/1. Functionally, involved in the biosynthesis of the central metabolite phospho-alpha-D-ribosyl-1-pyrophosphate (PRPP) via the transfer of pyrophosphoryl group from ATP to 1-hydroxyl of ribose-5-phosphate (Rib-5-P). The chain is Ribose-phosphate pyrophosphokinase from Methanothermobacter thermautotrophicus (strain ATCC 29096 / DSM 1053 / JCM 10044 / NBRC 100330 / Delta H) (Methanobacterium thermoautotrophicum).